The primary structure comprises 792 residues: Protocadherin beta-18 (792 aa).

The signal sequence occupies residues 1-26 (MAARGSCVSRQRQVLFLFLLGGLCLA). Cadherin domains follow at residues 27 to 133 (GSEL…SPIF), 134 to 242 (QDKK…APQF), 243 to 347 (PQEL…APEL), 348 to 451 (IMSS…APAF), 452 to 561 (NQTS…APFV), and 568 to 676 (ASAP…LPEV). An N-linked (GlcNAc...) asparagine glycan is attached at N169. 2 N-linked (GlcNAc...) asparagine glycosylation sites follow: N418 and N452. The chain crosses the membrane as a helical span at residues 693–713 (VIALASVSSLFLLSVLLFVGV).

The protein resides in the cell membrane. Its function is as follows. Potential calcium-dependent cell-adhesion protein. This Mus musculus (Mouse) protein is Protocadherin beta-18 (Pcdhb18).